The chain runs to 493 residues: 3-octaprenyl-4-hydroxybenzoate carboxy-lyase (493 aa).

N172 is a binding site for Mn(2+). Prenylated FMN is bound by residues 175–177 (IYR), 189–191 (RWL), and 194–195 (RG). Residue E238 coordinates Mn(2+). D287 acts as the Proton donor in catalysis.

This sequence belongs to the UbiD family. In terms of assembly, homohexamer. Requires prenylated FMN as cofactor. It depends on Mn(2+) as a cofactor.

Its subcellular location is the cell membrane. It carries out the reaction a 4-hydroxy-3-(all-trans-polyprenyl)benzoate + H(+) = a 2-(all-trans-polyprenyl)phenol + CO2. Its pathway is cofactor biosynthesis; ubiquinone biosynthesis. In terms of biological role, catalyzes the decarboxylation of 3-octaprenyl-4-hydroxy benzoate to 2-octaprenylphenol, an intermediate step in ubiquinone biosynthesis. This Shewanella frigidimarina (strain NCIMB 400) protein is 3-octaprenyl-4-hydroxybenzoate carboxy-lyase.